Reading from the N-terminus, the 159-residue chain is MDATFWAFIALVIFVVIVVYMKVPGMIGRTLDERADRIKKELEEARTLREEAQQLLAEYHRKRKEAEKEAGDIVASAEREAKALLEEAKRATEEYVARRNKLAEQKIATAETDAINAVRASAVDLAVAAAGSILAEKVDAKAAGNLFNDALAQVKSHLN.

Residues 1-21 (MDATFWAFIALVIFVVIVVYM) form a helical membrane-spanning segment.

The protein belongs to the ATPase B chain family. F-type ATPases have 2 components, F(1) - the catalytic core - and F(0) - the membrane proton channel. F(1) has five subunits: alpha(3), beta(3), gamma(1), delta(1), epsilon(1). F(0) has three main subunits: a(1), b(2) and c(10-14). The alpha and beta chains form an alternating ring which encloses part of the gamma chain. F(1) is attached to F(0) by a central stalk formed by the gamma and epsilon chains, while a peripheral stalk is formed by the delta and b chains.

The protein resides in the cell inner membrane. Functionally, f(1)F(0) ATP synthase produces ATP from ADP in the presence of a proton or sodium gradient. F-type ATPases consist of two structural domains, F(1) containing the extramembraneous catalytic core and F(0) containing the membrane proton channel, linked together by a central stalk and a peripheral stalk. During catalysis, ATP synthesis in the catalytic domain of F(1) is coupled via a rotary mechanism of the central stalk subunits to proton translocation. Component of the F(0) channel, it forms part of the peripheral stalk, linking F(1) to F(0). The protein is ATP synthase subunit b 2 of Brucella canis (strain ATCC 23365 / NCTC 10854 / RM-666).